Consider the following 568-residue polypeptide: Oxygen-dependent choline dehydrogenase (568 aa).

FAD is bound at residue 8–37 (DYIIIGAGSAGNTLAARLTEDAGVTVLLLE). His477 (proton acceptor) is an active-site residue.

This sequence belongs to the GMC oxidoreductase family. It depends on FAD as a cofactor.

The catalysed reaction is choline + A = betaine aldehyde + AH2. It carries out the reaction betaine aldehyde + NAD(+) + H2O = glycine betaine + NADH + 2 H(+). It functions in the pathway amine and polyamine biosynthesis; betaine biosynthesis via choline pathway; betaine aldehyde from choline (cytochrome c reductase route): step 1/1. Its function is as follows. Involved in the biosynthesis of the osmoprotectant glycine betaine. Catalyzes the oxidation of choline to betaine aldehyde and betaine aldehyde to glycine betaine at the same rate. The chain is Oxygen-dependent choline dehydrogenase from Pseudomonas syringae pv. syringae (strain B728a).